Reading from the N-terminus, the 59-residue chain is Large ribosomal subunit protein uL30 (59 aa).

This sequence belongs to the universal ribosomal protein uL30 family. Part of the 50S ribosomal subunit.

The sequence is that of Large ribosomal subunit protein uL30 from Syntrophotalea carbinolica (strain DSM 2380 / NBRC 103641 / GraBd1) (Pelobacter carbinolicus).